Here is a 268-residue protein sequence, read N- to C-terminus: Eukaryotic translation initiation factor 3 subunit G-2 (268 aa).

In terms of domain architecture, RRM spans 187–265 (SAVRISNLSE…LILCVEWSKP (79 aa)).

Belongs to the eIF-3 subunit G family. In terms of assembly, component of the eukaryotic translation initiation factor 3 (eIF-3) complex. The eIF-3 complex interacts with pix.

The protein localises to the cytoplasm. In terms of biological role, RNA-binding component of the eukaryotic translation initiation factor 3 (eIF-3) complex, which is involved in protein synthesis of a specialized repertoire of mRNAs and, together with other initiation factors, stimulates binding of mRNA and methionyl-tRNAi to the 40S ribosome. The eIF-3 complex specifically targets and initiates translation of a subset of mRNAs involved in cell proliferation. This subunit can bind 18S rRNA. This is Eukaryotic translation initiation factor 3 subunit G-2 from Drosophila willistoni (Fruit fly).